Consider the following 279-residue polypeptide: MKVDLTIEYRGKLITPNQIKLLIALHKTKSQNEAAKLLNIKPSSFNIQLKRLENKLGVKLYYSSPNGTVLTDAGLEILETYNSYSKRLKNHFFTVSGFVSGEIAKILFGNPIITSFDNALKLLKMGFVDVLGVDDSYWIYRLGDERFLKSEIGSCDFNIFLIAYDNFVMVSKKEFNYKNLVGIRFSSQRIVYNILKKEGIKFKVKVRVKNPFRAIELVNEGYSLFLNESLLRYIDGDFNVIYPNFYEKTVHAINFISFGKDIEIDKKEIKKIKKLGFKI.

The region spanning 14–71 (ITPNQIKLLIALHKTKSQNEAAKLLNIKPSSFNIQLKRLENKLGVKLYYSSPNGTVLT) is the HTH lysR-type domain. The segment at residues 31-50 (QNEAAKLLNIKPSSFNIQLK) is a DNA-binding region (H-T-H motif).

Belongs to the LysR transcriptional regulatory family.

This is an uncharacterized protein from Methanocaldococcus jannaschii (strain ATCC 43067 / DSM 2661 / JAL-1 / JCM 10045 / NBRC 100440) (Methanococcus jannaschii).